The chain runs to 124 residues: Large ribosomal subunit protein bL12c (124 aa).

It belongs to the bacterial ribosomal protein bL12 family. Homodimer. Part of the ribosomal stalk of the 50S ribosomal subunit. Forms a multimeric L10(L12)X complex, where L10 forms an elongated spine to which 2 to 4 L12 dimers bind in a sequential fashion. Binds GTP-bound translation factors.

The protein localises to the plastid. It is found in the chloroplast. In terms of biological role, forms part of the ribosomal stalk which helps the ribosome interact with GTP-bound translation factors. Is thus essential for accurate translation. This Cyanidioschyzon merolae (strain NIES-3377 / 10D) (Unicellular red alga) protein is Large ribosomal subunit protein bL12c.